Reading from the N-terminus, the 190-residue chain is Threonylcarbamoyl-AMP synthase (190 aa).

The 184-residue stretch at 7–190 (GDAIAAAIDV…ALTGELFRQG (184 aa)) folds into the YrdC-like domain.

It belongs to the SUA5 family. TsaC subfamily.

The protein resides in the cytoplasm. The enzyme catalyses L-threonine + hydrogencarbonate + ATP = L-threonylcarbamoyladenylate + diphosphate + H2O. Functionally, required for the formation of a threonylcarbamoyl group on adenosine at position 37 (t(6)A37) in tRNAs that read codons beginning with adenine. Catalyzes the conversion of L-threonine, HCO(3)(-)/CO(2) and ATP to give threonylcarbamoyl-AMP (TC-AMP) as the acyladenylate intermediate, with the release of diphosphate. The protein is Threonylcarbamoyl-AMP synthase of Shigella flexneri.